The sequence spans 358 residues: Nitric oxide synthase oxygenase (358 aa).

Cys62 serves as a coordination point for heme.

The protein belongs to the NOS family. Bacterial NOS oxygenase subfamily. Homodimer. Requires heme as cofactor. It depends on (6S)-5,6,7,8-tetrahydrofolate as a cofactor.

The catalysed reaction is 3 reduced [flavodoxin] + 2 L-arginine + 4 O2 = 3 oxidized [flavodoxin] + 2 L-citrulline + 2 nitric oxide + 4 H2O + 5 H(+). Its function is as follows. Catalyzes the production of nitric oxide. This is Nitric oxide synthase oxygenase (nos) from Staphylococcus aureus (strain MRSA252).